A 134-amino-acid chain; its full sequence is Small ribosomal subunit protein uS9c (134 aa).

The interval 105-134 is disordered; that stretch reads QGYLTRNPLRKERKKYGLKKARKAPQFSKR. Residues 115–134 show a composition bias toward basic residues; it reads KERKKYGLKKARKAPQFSKR.

This sequence belongs to the universal ribosomal protein uS9 family.

It is found in the plastid. The protein resides in the chloroplast. The sequence is that of Small ribosomal subunit protein uS9c (rps9) from Nephroselmis olivacea (Green alga).